The following is a 797-amino-acid chain: Leucine-rich repeat-containing protein AAC1 (797 aa).

The segment covering 1–12 (MKRTSNRNEEAT) has biased composition (basic and acidic residues). 4 disordered regions span residues 1-20 (MKRT…SSTT), 51-103 (YSLF…TTTT), 125-148 (NLPT…TTTT), and 307-333 (HSTS…TITA). Residues 55-81 (NEPNNDNDTNSSTRPNKQQKLLKSNES) are compositionally biased toward polar residues. Residues 82 to 103 (TTSTTTTTTPITTTTTTTTTTT) show a composition bias toward low complexity. Residues 313–326 (SSPPPPPPPPPPQI) are compositionally biased toward pro residues. LRR repeat units lie at residues 376–397 (KLKK…DFFS), 406–425 (TLET…QLLS), 435–456 (VLKR…YLNK), 464–484 (QLET…IMMK), 492–513 (SLKE…DFGK), 514–535 (SITS…KGLS), 543–564 (SITS…KSLS), 572–593 (TLKF…DHLV), 601–622 (SIHS…TLSQ), and 633–653 (PFKY…KKLI).

The sequence is that of Leucine-rich repeat-containing protein AAC1 (AAC1) from Dictyostelium discoideum (Social amoeba).